The primary structure comprises 240 residues: UDP-2,3-diacylglucosamine hydrolase (240 aa).

Residues Asp8, His10, Asp41, Asn79, and His114 each contribute to the Mn(2+) site. 79–80 (NR) is a binding site for substrate. 5 residues coordinate substrate: Asp122, Ser160, Asn164, Lys167, and His195. 2 residues coordinate Mn(2+): His195 and His197.

The protein belongs to the LpxH family. Requires Mn(2+) as cofactor.

It is found in the cell inner membrane. It carries out the reaction UDP-2-N,3-O-bis[(3R)-3-hydroxytetradecanoyl]-alpha-D-glucosamine + H2O = 2-N,3-O-bis[(3R)-3-hydroxytetradecanoyl]-alpha-D-glucosaminyl 1-phosphate + UMP + 2 H(+). It participates in glycolipid biosynthesis; lipid IV(A) biosynthesis; lipid IV(A) from (3R)-3-hydroxytetradecanoyl-[acyl-carrier-protein] and UDP-N-acetyl-alpha-D-glucosamine: step 4/6. Hydrolyzes the pyrophosphate bond of UDP-2,3-diacylglucosamine to yield 2,3-diacylglucosamine 1-phosphate (lipid X) and UMP by catalyzing the attack of water at the alpha-P atom. Involved in the biosynthesis of lipid A, a phosphorylated glycolipid that anchors the lipopolysaccharide to the outer membrane of the cell. The sequence is that of UDP-2,3-diacylglucosamine hydrolase from Yersinia pestis bv. Antiqua (strain Angola).